A 457-amino-acid chain; its full sequence is Guanine nucleotide-binding protein subunit alpha homolog (457 aa).

A G-alpha domain is found at 131 to 457 (RQVKLLLLGA…QRNLNALMLQ (327 aa)). The segment at 134 to 147 (KLLLLGAGESGKST) is G1 motif. GTP is bound by residues 139 to 146 (GAGESGKS), 274 to 280 (LHCRKAT), 299 to 303 (DVGGQ), 369 to 372 (NKTD), and A429. S146 and T280 together coordinate Mg(2+). The G2 motif stretch occupies residues 272 to 280 (DILHCRKAT). The G3 motif stretch occupies residues 295–304 (FVFVDVGGQR). Positions 365 to 372 (ILFLNKTD) are G4 motif. The G5 motif stretch occupies residues 427–432 (TTAIDT).

It belongs to the G-alpha family. G(12) subfamily. G proteins are composed of 3 units; alpha, beta and gamma. The alpha chain contains the guanine nucleotide binding site. In terms of tissue distribution, in ovary, expressed in nurse cells and oocyte. In early embryos, distributed uniformly. At the extended germband stage, accumulates in the mesoderm.

The protein resides in the cytoplasm. In terms of biological role, may play a role in a signal transduction pathway used during gastrulation. Required specifically for the ventral furrow and posterior midgut invaginations, where it is necessary for coordinating cell shape changes. Its function is as follows. Guanine nucleotide-binding proteins (G proteins) are involved as modulators or transducers in various transmembrane signaling systems. The protein is Guanine nucleotide-binding protein subunit alpha homolog (cta) of Drosophila melanogaster (Fruit fly).